Reading from the N-terminus, the 153-residue chain is UPF0756 membrane protein BCB4264_A4705 (153 aa).

A run of 4 helical transmembrane segments spans residues 8 to 28 (FLFI…TVAI), 54 to 74 (LGVT…EIGF), 87 to 107 (WIAL…VQLL), and 117 to 137 (LVFG…GPLI).

Belongs to the UPF0756 family.

The protein localises to the cell membrane. This Bacillus cereus (strain B4264) protein is UPF0756 membrane protein BCB4264_A4705.